A 158-amino-acid polypeptide reads, in one-letter code: NAD(P)H-quinone oxidoreductase subunit J, chloroplastic (158 aa).

Belongs to the complex I 30 kDa subunit family. NDH is composed of at least 16 different subunits, 5 of which are encoded in the nucleus.

The protein localises to the plastid. It is found in the chloroplast thylakoid membrane. It carries out the reaction a plastoquinone + NADH + (n+1) H(+)(in) = a plastoquinol + NAD(+) + n H(+)(out). The catalysed reaction is a plastoquinone + NADPH + (n+1) H(+)(in) = a plastoquinol + NADP(+) + n H(+)(out). Its function is as follows. NDH shuttles electrons from NAD(P)H:plastoquinone, via FMN and iron-sulfur (Fe-S) centers, to quinones in the photosynthetic chain and possibly in a chloroplast respiratory chain. The immediate electron acceptor for the enzyme in this species is believed to be plastoquinone. Couples the redox reaction to proton translocation, and thus conserves the redox energy in a proton gradient. The polypeptide is NAD(P)H-quinone oxidoreductase subunit J, chloroplastic (Panax ginseng (Korean ginseng)).